The sequence spans 506 residues: Tyrosine-protein phosphatase non-receptor type substrate 1 (506 aa).

Positions 1–29 (MEPARPAPGRLRPLLCLLLAASNAWTGTA) are cleaved as a signal peptide. Residues 30-145 (GDGELQVIQP…SGPGTHLTVS (116 aa)) form the Ig-like V-type domain. At 30-371 (GDGELQVIQP…PGPNDSNWTS (342 aa)) the chain is on the extracellular side. Cys-55 and Cys-121 are joined by a disulfide. Residue Asn-92 is glycosylated (N-linked (GlcNAc...) asparagine). Residues 136 to 159 (SGPGTHLTVSAKPSPPVLSGPTVR) are disordered. Ig-like C1-type domains lie at 148–248 (PSPP…ANLS) and 255–348 (PTLE…HTLE). N-linked (GlcNAc...) asparagine glycans are attached at residues Asn-167, Asn-179, Asn-204, Asn-210, Asn-246, Asn-270, Asn-292, Asn-311, Asn-319, Asn-344, Asn-365, and Asn-368. A disulfide bridge connects residues Cys-170 and Cys-228. The cysteines at positions 273 and 331 are disulfide-linked. A disordered region spans residues 344 to 364 (NHTLEVSAPQKDQDTGQTPGP). A helical membrane pass occupies residues 372–392 (IFIVVGVVCALLVALLIAALY). Over 393–506 (LLRIRQNKAK…EYASVQVQRK (114 aa)) the chain is Cytoplasmic. A disordered region spans residues 402–468 (KGSTSSTRLH…QARPPPVSED (67 aa)). Basic and acidic residues predominate over residues 409–418 (RLHEPEKNTR). Residues 419 to 429 (ETTQIQDNNDI) show a composition bias toward polar residues. Phosphotyrosine; by Tyr-kinases is present on Tyr-431. The SH2-binding motif lies at 432–435 (ADLN). Positions 441–446 (KSTPKA) match the SH3-binding motif. A compositionally biased stretch (polar residues) spans 444–456 (PKANEPNNHTEYA). Residues Tyr-455, Tyr-472, and Tyr-498 each carry the phosphotyrosine; by Tyr-kinases modification. 3 short sequence motifs (SH2-binding) span residues 455 to 458 (YASI), 472 to 475 (YADL), and 498 to 501 (YASV). The segment at 480–506 (LNRTPKQPAPKPEPSYSEYASVQVQRK) is disordered. Polar residues predominate over residues 497–506 (EYASVQVQRK).

Binds PTPN11 when tyrosine-phosphorylated, except in macrophages, where it primarily binds PTPN6. Binds GRB2 in vitro. Binds JAK2 irrespective of its phosphorylation status and forms a stable complex. Binds SCAP1 and/or SCAP2. The resulting complex recruits FYB1. Binds FGR and PTK2B. Interacts with TRIM2. Post-translationally, phosphorylated on tyrosine residues. Highly expressed in spleen macrophages. Detected in skin dendritic cells.

It localises to the membrane. Immunoglobulin-like cell surface receptor for CD47. Acts as docking protein and induces translocation of PTPN6, PTPN11 and other binding partners from the cytosol to the plasma membrane. Supports adhesion of cerebellar neurons, neurite outgrowth and glial cell attachment. May play a key role in intracellular signaling during synaptogenesis and in synaptic function. Involved in the negative regulation of receptor tyrosine kinase-coupled cellular responses induced by cell adhesion, growth factors or insulin. Mediates negative regulation of phagocytosis, mast cell activation and dendritic cell activation. CD47 binding prevents maturation of immature dendritic cells and inhibits cytokine production by mature dendritic cells. Plays a role in antiviral immunity and limits new world arenavirus infection by decreasing virus internalization. Receptor for THBS1. Interaction with THBS1 stimulates phosphorylation of SIRPA. In response to THBS1, involved in ROS signaling in non-phagocytic cells, stimulating NADPH oxidase-derived ROS production. This is Tyrosine-protein phosphatase non-receptor type substrate 1 (SIRPA) from Bos taurus (Bovine).